Consider the following 232-residue polypeptide: Acetate--CoA ligase [ADP-forming] I subunit beta (232 aa).

One can recognise an ATP-grasp domain in the interval 27-63; that stretch reads KEILKLYGIPVPEFKVARNEEEAVKFSGEIGYPVVMK. 53-64 is an ATP binding site; that stretch reads SGEIGYPVVMKI.

Belongs to the acetate CoA ligase beta subunit family. Heterotetramer of two alpha and two beta subunits.

Its subcellular location is the cytoplasm. The enzyme catalyses acetate + ATP + CoA = acetyl-CoA + ADP + phosphate. Activity is dependent on magnesium. In terms of biological role, catalyzes the reversible formation of acetate and ATP from acetyl-CoA by using ADP and phosphate. Can use other substrates such as isobutyryl-CoA, propionyl-CoA and butyryl-CoA, but not indoleacetyl-CoA, phenylacetyl-CoA or succinyl-CoA. Seems to be involved primarily in the conversion of acetyl-CoA to acetate. Participates in the degradation of branched-chain amino acids via branched-chain-acyl-CoA esters. The polypeptide is Acetate--CoA ligase [ADP-forming] I subunit beta (Pyrococcus furiosus (strain ATCC 43587 / DSM 3638 / JCM 8422 / Vc1)).